Consider the following 99-residue polypeptide: Single insulin-like growth factor-binding domain protein-2 (99 aa).

The N-terminal stretch at 1-18 (MESLFIFAFGMMLSSASA) is a signal peptide. One can recognise an IGFBP N-terminal domain in the interval 19–98 (LSCIPCVPEE…GQEVGRCRKK (80 aa)). Serine 20 carries an O-linked (GalNAc...) serine glycan. 6 disulfides stabilise this stretch: cysteine 21-cysteine 44, cysteine 24-cysteine 46, cysteine 29-cysteine 47, cysteine 35-cysteine 50, cysteine 58-cysteine 74, and cysteine 68-cysteine 95.

Expressed in hemocytes.

It is found in the secreted. Has a role in the innate immune system. This is Single insulin-like growth factor-binding domain protein-2 from Cupiennius salei (American wandering spider).